A 673-amino-acid polypeptide reads, in one-letter code: DNA ligase (673 aa).

Residues 33–37 (DYEYD), 82–83 (SL), and Glu113 each bind NAD(+). Lys115 serves as the catalytic N6-AMP-lysine intermediate. Arg136, Glu170, Lys285, and Lys309 together coordinate NAD(+). Residues Cys403, Cys406, Cys421, and Cys426 each contribute to the Zn(2+) site. The BRCT domain maps to 583–672 (AKSDILKGYT…SREEAEKILM (90 aa)).

The protein belongs to the NAD-dependent DNA ligase family. LigA subfamily. The cofactor is Mg(2+). Mn(2+) is required as a cofactor.

It catalyses the reaction NAD(+) + (deoxyribonucleotide)n-3'-hydroxyl + 5'-phospho-(deoxyribonucleotide)m = (deoxyribonucleotide)n+m + AMP + beta-nicotinamide D-nucleotide.. DNA ligase that catalyzes the formation of phosphodiester linkages between 5'-phosphoryl and 3'-hydroxyl groups in double-stranded DNA using NAD as a coenzyme and as the energy source for the reaction. It is essential for DNA replication and repair of damaged DNA. The sequence is that of DNA ligase from Caldicellulosiruptor bescii (strain ATCC BAA-1888 / DSM 6725 / KCTC 15123 / Z-1320) (Anaerocellum thermophilum).